A 181-amino-acid chain; its full sequence is Crossover junction endodeoxyribonuclease RuvC (181 aa).

Residues Asp-7, Glu-67, and Asp-139 contribute to the active site. 3 residues coordinate Mg(2+): Asp-7, Glu-67, and Asp-139.

This sequence belongs to the RuvC family. Homodimer which binds Holliday junction (HJ) DNA. The HJ becomes 2-fold symmetrical on binding to RuvC with unstacked arms; it has a different conformation from HJ DNA in complex with RuvA. In the full resolvosome a probable DNA-RuvA(4)-RuvB(12)-RuvC(2) complex forms which resolves the HJ. Mg(2+) serves as cofactor.

Its subcellular location is the cytoplasm. It catalyses the reaction Endonucleolytic cleavage at a junction such as a reciprocal single-stranded crossover between two homologous DNA duplexes (Holliday junction).. In terms of biological role, the RuvA-RuvB-RuvC complex processes Holliday junction (HJ) DNA during genetic recombination and DNA repair. Endonuclease that resolves HJ intermediates. Cleaves cruciform DNA by making single-stranded nicks across the HJ at symmetrical positions within the homologous arms, yielding a 5'-phosphate and a 3'-hydroxyl group; requires a central core of homology in the junction. The consensus cleavage sequence is 5'-(A/T)TT(C/G)-3'. Cleavage occurs on the 3'-side of the TT dinucleotide at the point of strand exchange. HJ branch migration catalyzed by RuvA-RuvB allows RuvC to scan DNA until it finds its consensus sequence, where it cleaves and resolves the cruciform DNA. In Cupriavidus necator (strain ATCC 17699 / DSM 428 / KCTC 22496 / NCIMB 10442 / H16 / Stanier 337) (Ralstonia eutropha), this protein is Crossover junction endodeoxyribonuclease RuvC.